The following is a 31-amino-acid chain: Zinc metalloproteinase alsophinase (31 aa).

Glutamine 1 is subject to Pyrrolidone carboxylic acid. One can recognise a Peptidase M12B domain in the interval 9-31; the sequence is KYIEFYLVVDNGMFXKYSXXFTV. Residue glutamate 12 coordinates Ca(2+).

Monomer. The cofactor is Zn(2+). Post-translationally, contains 9 disulfide bonds. Expressed by the venom gland.

It localises to the secreted. Its activity is regulated as follows. Inhibited by 1,10-phenanthroline. Its function is as follows. Snake venom zinc metalloprotease that has potent hemorrhagic activity, fibrinogenolytic activity on the alpha-subunit of human fibrinogen (FGA) in vitro and provokes necrosis in skin, muscle and lung tissues. May contribute to local edema and ecchymosis induced by venom. Hydrolyzes model substrate (beta-chain of insulin) at Ala(14)-Leu(15). The protein is Zinc metalloproteinase alsophinase of Borikenophis portoricensis (Puerto Rican racer).